The sequence spans 452 residues: Probable multidrug resistance protein NorM (452 aa).

Transmembrane regions (helical) follow at residues 14 to 34, 56 to 76, 97 to 117, 129 to 149, 164 to 184, 195 to 215, 244 to 264, 284 to 304, 319 to 339, 360 to 380, 392 to 412, and 417 to 437; these read LLHI…ITFL, LWTP…PIVA, VAAL…DLIL, IAKH…VYTV, MMIT…FIFG, GAGL…FFII, IGLP…AVTL, ASLL…VVGF, LIGI…ILLF, FLIY…IQGA, AAAF…VGTF, and AFGY…GLFF.

The protein belongs to the multi antimicrobial extrusion (MATE) (TC 2.A.66.1) family.

It is found in the cell membrane. Functionally, multidrug efflux pump. The sequence is that of Probable multidrug resistance protein NorM (norM) from Bacillus subtilis (strain 168).